The following is a 214-amino-acid chain: MGLAGVCALRRSAGYILVGGAGGQSAAAAARRYSEGEWASGGVRSFSRAAAAMAPIKVGDAIPAVEVFEGEPGNKVNLAELFKGKKGVLFGVPGAFTPGCSKTHLPGFVEQAEALKAKGVQVVACLSVNDAFVTGEWGRAHKAEGKVRLLADPTGAFGKETDLLLDDSLVSIFGNRRLKRFSMVVQDGIVKALNVEPDGTGLTCSLAPNIISQL.

The N-terminal 52 residues, 1-52 (MGLAGVCALRRSAGYILVGGAGGQSAAAAARRYSEGEWASGGVRSFSRAAAA), are a transit peptide targeting the mitochondrion. The 159-residue stretch at 56–214 (IKVGDAIPAV…SLAPNIISQL (159 aa)) folds into the Thioredoxin domain. K75 carries the N6-acetyllysine modification. K83 is modified (N6-acetyllysine; alternate). K83 is modified (N6-succinyllysine; alternate). The Cysteine sulfenic acid (-SOH) intermediate role is filled by C100. The S-palmitoyl cysteine moiety is linked to residue C100. C100 and C204 form a disulfide bridge. Residue K116 is modified to N6-succinyllysine. S171 and S182 each carry phosphoserine. The Microbody targeting signal motif lies at 212–214 (SQL).

It belongs to the peroxiredoxin family. Prx5 subfamily. As to quaternary structure, monomer. In terms of processing, S-palmitoylated. Palmitoylation occurs on the active site, inhibiting its reactivity; therefore PRDX5 palmitoylation status determines its antioxidant capacity. Post-translationally, S-palmitoylated. Depalmitoylated by ABHD10. As to expression, widely expressed.

It localises to the mitochondrion. It is found in the cytoplasm. The protein localises to the peroxisome matrix. It catalyses the reaction a hydroperoxide + [thioredoxin]-dithiol = an alcohol + [thioredoxin]-disulfide + H2O. Its function is as follows. Thiol-specific peroxidase that catalyzes the reduction of hydrogen peroxide and organic hydroperoxides to water and alcohols, respectively. Plays a role in cell protection against oxidative stress by detoxifying peroxides and as sensor of hydrogen peroxide-mediated signaling events. The chain is Peroxiredoxin-5, mitochondrial from Homo sapiens (Human).